A 352-amino-acid polypeptide reads, in one-letter code: Glutamine synthetase (352 aa).

Positions 3–82 constitute a GS beta-grasp domain; the sequence is YQAEYIWIDG…LCEVQLTDFT (80 aa). Positions 87 to 352 constitute a GS catalytic domain; it reads TRAAALGVAE…TTPAPAEASV (266 aa). Residues Glu-108 and Glu-110 each coordinate Mg(2+). An ATP-binding site is contributed by Glu-164. Positions 169 and 176 each coordinate Mg(2+). Glu-272 provides a ligand contact to L-glutamate.

The protein belongs to the glutamine synthetase family. In terms of assembly, homooctamer and homotetramer. The cofactor is Mg(2+).

The protein resides in the cytoplasm. The catalysed reaction is L-glutamate + NH4(+) + ATP = L-glutamine + ADP + phosphate + H(+). Functionally, catalyzes the ATP-dependent biosynthesis of glutamine from glutamate and ammonia. The polypeptide is Glutamine synthetase (Frankia alni).